The sequence spans 280 residues: 2-dehydro-3-deoxyphosphooctonate aldolase (280 aa).

The protein belongs to the KdsA family.

It is found in the cytoplasm. The enzyme catalyses D-arabinose 5-phosphate + phosphoenolpyruvate + H2O = 3-deoxy-alpha-D-manno-2-octulosonate-8-phosphate + phosphate. Its pathway is carbohydrate biosynthesis; 3-deoxy-D-manno-octulosonate biosynthesis; 3-deoxy-D-manno-octulosonate from D-ribulose 5-phosphate: step 2/3. It functions in the pathway bacterial outer membrane biogenesis; lipopolysaccharide biosynthesis. This Pseudomonas putida (strain W619) protein is 2-dehydro-3-deoxyphosphooctonate aldolase.